A 734-amino-acid polypeptide reads, in one-letter code: Photosystem I P700 chlorophyll a apoprotein A2 (734 aa).

8 helical membrane-spanning segments follow: residues 46-69 (IFAS…FHVA), 135-158 (LYTG…LHLQ), 175-199 (LNHH…HVAI), 273-291 (IAHH…GHMY), 330-353 (IHFQ…QHMY), 369-395 (AALY…IFFI), 417-439 (AIIS…LYVH), and 517-535 (FLVH…LILV). 2 residues coordinate [4Fe-4S] cluster: Cys-559 and Cys-568. 2 consecutive transmembrane segments (helical) span residues 575-596 (AFYL…YWHW) and 643-665 (LSVW…MFLI). Chlorophyll a-binding residues include His-654, Met-662, and Tyr-670. Trp-671 is a binding site for phylloquinone. Residues 707–727 (LVGLAHFSVGYIFTYAAFLIA) form a helical membrane-spanning segment.

It belongs to the PsaA/PsaB family. In terms of assembly, the PsaA/B heterodimer binds the P700 chlorophyll special pair and subsequent electron acceptors. PSI consists of a core antenna complex that captures photons, and an electron transfer chain that converts photonic excitation into a charge separation. The eukaryotic PSI reaction center is composed of at least 11 subunits. P700 is a chlorophyll a/chlorophyll a' dimer, A0 is one or more chlorophyll a, A1 is one or both phylloquinones and FX is a shared 4Fe-4S iron-sulfur center. is required as a cofactor.

The protein resides in the plastid. The protein localises to the chloroplast thylakoid membrane. The enzyme catalyses reduced [plastocyanin] + hnu + oxidized [2Fe-2S]-[ferredoxin] = oxidized [plastocyanin] + reduced [2Fe-2S]-[ferredoxin]. Its function is as follows. PsaA and PsaB bind P700, the primary electron donor of photosystem I (PSI), as well as the electron acceptors A0, A1 and FX. PSI is a plastocyanin-ferredoxin oxidoreductase, converting photonic excitation into a charge separation, which transfers an electron from the donor P700 chlorophyll pair to the spectroscopically characterized acceptors A0, A1, FX, FA and FB in turn. Oxidized P700 is reduced on the lumenal side of the thylakoid membrane by plastocyanin. In Calycanthus floridus var. glaucus (Eastern sweetshrub), this protein is Photosystem I P700 chlorophyll a apoprotein A2.